The primary structure comprises 47 residues: Protein YqgG (47 aa).

The sequence is that of Protein YqgG from Escherichia coli (strain K12).